We begin with the raw amino-acid sequence, 201 residues long: Recombination protein RecR (201 aa).

Residues 57-72 (CADCRTFTEQDVCNIC) form a C4-type zinc finger. The region spanning 81 to 176 (GQICVVESPA…EASRIAHGVP (96 aa)) is the Toprim domain.

It belongs to the RecR family.

May play a role in DNA repair. It seems to be involved in an RecBC-independent recombinational process of DNA repair. It may act with RecF and RecO. The polypeptide is Recombination protein RecR (Citrobacter koseri (strain ATCC BAA-895 / CDC 4225-83 / SGSC4696)).